The chain runs to 392 residues: Formate-dependent phosphoribosylglycinamide formyltransferase (392 aa).

Residues 22-23 (EL) and Glu-82 contribute to the N(1)-(5-phospho-beta-D-ribosyl)glycinamide site. ATP-binding positions include Arg-114, Lys-155, 160–165 (SSGKGQ), 195–198 (EGLV), and Glu-203. The ATP-grasp domain maps to 119-308 (RLAAETLGVP…EFALHVRAFL (190 aa)). Residues Glu-267 and Glu-279 each coordinate Mg(2+). N(1)-(5-phospho-beta-D-ribosyl)glycinamide contacts are provided by residues Asp-286, Lys-355, and 362–363 (RR).

This sequence belongs to the PurK/PurT family. As to quaternary structure, homodimer.

It carries out the reaction N(1)-(5-phospho-beta-D-ribosyl)glycinamide + formate + ATP = N(2)-formyl-N(1)-(5-phospho-beta-D-ribosyl)glycinamide + ADP + phosphate + H(+). It participates in purine metabolism; IMP biosynthesis via de novo pathway; N(2)-formyl-N(1)-(5-phospho-D-ribosyl)glycinamide from N(1)-(5-phospho-D-ribosyl)glycinamide (formate route): step 1/1. Its function is as follows. Involved in the de novo purine biosynthesis. Catalyzes the transfer of formate to 5-phospho-ribosyl-glycinamide (GAR), producing 5-phospho-ribosyl-N-formylglycinamide (FGAR). Formate is provided by PurU via hydrolysis of 10-formyl-tetrahydrofolate. This chain is Formate-dependent phosphoribosylglycinamide formyltransferase, found in Pectobacterium carotovorum subsp. carotovorum (strain PC1).